Consider the following 878-residue polypeptide: Lon protease 2 (878 aa).

The region spanning 85–281 is the Lon N-terminal domain; it reads LYLLPVKERP…KVLSLFKHEI (197 aa). Residue 434–441 coordinates ATP; that stretch reads GPPGVGKT. Residues 668-850 enclose the Lon proteolytic domain; that stretch reads NQQMGTVTGL…DDVAKLTFHI (183 aa). Catalysis depends on residues Ser-756 and Lys-799.

Belongs to the peptidase S16 family. In terms of assembly, homohexamer. Organized in a ring with a central cavity.

The protein localises to the cytoplasm. It catalyses the reaction Hydrolysis of proteins in presence of ATP.. Functionally, ATP-dependent serine protease that mediates the selective degradation of mutant and abnormal proteins as well as certain short-lived regulatory proteins. Required for cellular homeostasis and for survival from DNA damage and developmental changes induced by stress. Degrades polypeptides processively to yield small peptide fragments that are 5 to 10 amino acids long. Binds to DNA in a double-stranded, site-specific manner. The sequence is that of Lon protease 2 from Hydrogenovibrio crunogenus (strain DSM 25203 / XCL-2) (Thiomicrospira crunogena).